The sequence spans 45 residues: uncharacterized protein (45 aa).

This is an uncharacterized protein from Acidianus two-tailed virus (ATV).